The chain runs to 287 residues: Pyridoxal 5'-phosphate synthase subunit PdxS (287 aa).

Asp21 contributes to the D-ribose 5-phosphate binding site. Residue Lys78 is the Schiff-base intermediate with D-ribose 5-phosphate of the active site. Position 150 (Gly150) interacts with D-ribose 5-phosphate. D-glyceraldehyde 3-phosphate is bound at residue Arg162. D-ribose 5-phosphate contacts are provided by residues Gly211 and 232–233 (GS).

Belongs to the PdxS/SNZ family. In the presence of PdxT, forms a dodecamer of heterodimers.

The catalysed reaction is aldehydo-D-ribose 5-phosphate + D-glyceraldehyde 3-phosphate + L-glutamine = pyridoxal 5'-phosphate + L-glutamate + phosphate + 3 H2O + H(+). It functions in the pathway cofactor biosynthesis; pyridoxal 5'-phosphate biosynthesis. Its function is as follows. Catalyzes the formation of pyridoxal 5'-phosphate from ribose 5-phosphate (RBP), glyceraldehyde 3-phosphate (G3P) and ammonia. The ammonia is provided by the PdxT subunit. Can also use ribulose 5-phosphate and dihydroxyacetone phosphate as substrates, resulting from enzyme-catalyzed isomerization of RBP and G3P, respectively. This Tropheryma whipplei (strain TW08/27) (Whipple's bacillus) protein is Pyridoxal 5'-phosphate synthase subunit PdxS.